The chain runs to 552 residues: Cation/acetate symporter ActP (552 aa).

A run of 14 helical transmembrane segments spans residues 5–25 (FMMLFGLLTLPVLAWAADALT), 35–55 (IQAIVMFLLFVGGTLYITYWA), 78–98 (GLAIAGDYMSAASFLGISALV), 105–125 (GLIYSLGFLVGWPIILFLIAE), 151–171 (LSACGSLVVVALYLIAQMVGA), 185–205 (VAVILVGILMVMYVMFGGMLA), 208–228 (WVQIIKAVLLLFGATFMAVMV), 264–284 (ISALSLGLGLMFGTAGLPHIL), 305–325 (GFMGYFYFLTFIIGFGAILLV), 357–377 (FFLGFISAVAFATILAVVAGL), 407–427 (VSKITVLVLGVVAISLGILFE), 431–451 (IAFMVGLAFSIAASCNFPIII), 466–486 (IGGWAGLLTAVILMILGPTIW), and 499–519 (YDYPALFSMLVAFIGIWFFSI).

Belongs to the sodium:solute symporter (SSF) (TC 2.A.21) family.

The protein localises to the cell inner membrane. Its function is as follows. Transports acetate. This Pectobacterium carotovorum subsp. carotovorum (strain PC1) protein is Cation/acetate symporter ActP.